Consider the following 828-residue polypeptide: Periplasmic nitrate reductase (828 aa).

Positions 1 to 31 form a signal peptide, tat-type signal; sequence MKLSRRGFMKANAVAAAAAAAGLSVPGVARA. The 4Fe-4S Mo/W bis-MGD-type domain occupies 39 to 95; that stretch reads IKWDKAPCRFCGTGCGVLVGTQQGRVVACQGDPDAPVNRGLNCIKGYFLPKIMYGED. [4Fe-4S] cluster contacts are provided by cysteine 46, cysteine 49, cysteine 53, and cysteine 81. Mo-bis(molybdopterin guanine dinucleotide)-binding positions include lysine 83, glutamine 150, asparagine 175, cysteine 179, 212 to 219, 243 to 247, 262 to 264, methionine 372, glutamine 376, asparagine 482, 508 to 509, lysine 531, aspartate 558, and 718 to 727; these read WGANMAEM, STYQH, QSD, SD, and TGRVLEHWHT. A substrate-binding site is contributed by phenylalanine 794. Mo-bis(molybdopterin guanine dinucleotide) contacts are provided by asparagine 802 and lysine 819.

Belongs to the prokaryotic molybdopterin-containing oxidoreductase family. NasA/NapA/NarB subfamily. Component of the periplasmic nitrate reductase NapAB complex composed of NapA and NapB. It depends on [4Fe-4S] cluster as a cofactor. The cofactor is Mo-bis(molybdopterin guanine dinucleotide). Post-translationally, predicted to be exported by the Tat system. The position of the signal peptide cleavage has not been experimentally proven.

It localises to the periplasm. The catalysed reaction is 2 Fe(II)-[cytochrome] + nitrate + 2 H(+) = 2 Fe(III)-[cytochrome] + nitrite + H2O. Catalytic subunit of the periplasmic nitrate reductase complex NapAB. Receives electrons from NapB and catalyzes the reduction of nitrate to nitrite. In Shigella dysenteriae serotype 1 (strain Sd197), this protein is Periplasmic nitrate reductase.